Here is a 506-residue protein sequence, read N- to C-terminus: Cationic amino acid transporter 8 (506 aa).

Residues N2 and N5 are each glycosylated (N-linked (GlcNAc...) asparagine). The helical transmembrane segment at 38–58 (FYLLLIIIIYTATSACIYFDW) threads the bilayer. N-linked (GlcNAc...) asparagine glycosylation is present at N75. A run of 5 helical transmembrane segments spans residues 93-113 (NLYP…GFLY), 116-136 (IGPK…WIFL), 147-167 (LIGF…ILTV), 174-194 (ISTF…AVPA), and 211-231 (ICYG…TFLL). An N-linked (GlcNAc...) asparagine glycan is attached at N277. Residues 302–322 (ILLFFKVLLSYPSICIIVYFI) traverse the membrane as a helical segment. N-linked (GlcNAc...) asparagine glycosylation is found at N325 and N342. The next 4 membrane-spanning stretches (helical) occupy residues 344–364 (SIIN…IIFG), 372–392 (AAII…TALI), 399–419 (LISA…IYCF), and 427–447 (VVFG…SLFC). N-linked (GlcNAc...) asparagine glycosylation is found at N453 and N456. A helical membrane pass occupies residues 466–486 (TISILLAISFIIMFLPLSILY).

This sequence belongs to the SLC43A transporter (TC 2.A.1.44) family.

Its subcellular location is the cell membrane. In terms of biological role, cationic amino acid transporter which transports L-arginine, L-lysine and, to a lesser extent, L-histidine and ornithine. Plays an essential role in gametogenesis. This is Cationic amino acid transporter 8 from Plasmodium berghei (strain Anka).